A 259-amino-acid chain; its full sequence is Probable 6-phosphogluconolactonase 2 (259 aa).

This sequence belongs to the glucosamine/galactosamine-6-phosphate isomerase family. 6-phosphogluconolactonase subfamily.

It is found in the cytoplasm. The protein localises to the cytosol. The catalysed reaction is 6-phospho-D-glucono-1,5-lactone + H2O = 6-phospho-D-gluconate + H(+). It functions in the pathway carbohydrate degradation; pentose phosphate pathway; D-ribulose 5-phosphate from D-glucose 6-phosphate (oxidative stage): step 2/3. Its function is as follows. Catalyzes the hydrolysis of 6-phosphogluconolactone to 6-phosphogluconate. The sequence is that of Probable 6-phosphogluconolactonase 2 from Arabidopsis thaliana (Mouse-ear cress).